We begin with the raw amino-acid sequence, 317 residues long: tRNA dimethylallyltransferase (317 aa).

Residue 14-21 coordinates ATP; that stretch reads GPTASGKT. Residue 16–21 participates in substrate binding; it reads TASGKT. 3 interaction with substrate tRNA regions span residues 39–42, 163–167, and 248–253; these read DSAL, QRIQR, and RCVGYR.

This sequence belongs to the IPP transferase family. Monomer. Mg(2+) serves as cofactor.

It carries out the reaction adenosine(37) in tRNA + dimethylallyl diphosphate = N(6)-dimethylallyladenosine(37) in tRNA + diphosphate. In terms of biological role, catalyzes the transfer of a dimethylallyl group onto the adenine at position 37 in tRNAs that read codons beginning with uridine, leading to the formation of N6-(dimethylallyl)adenosine (i(6)A). In Paraburkholderia phymatum (strain DSM 17167 / CIP 108236 / LMG 21445 / STM815) (Burkholderia phymatum), this protein is tRNA dimethylallyltransferase.